A 277-amino-acid chain; its full sequence is F41 fimbrial protein (277 aa).

Positions 1–22 (MKKTLIALAVAASAAVSGSVMA) are cleaved as a signal peptide.

The protein belongs to the fimbrial K88 protein family.

It localises to the fimbrium. In terms of biological role, fimbriae (also called pili), polar filaments radiating from the surface of the bacterium to a length of 0.5-1.5 micrometers and numbering 100-300 per cell, enable bacteria to colonize the epithelium of specific host organs. In Escherichia coli, this protein is F41 fimbrial protein (FimF41a).